A 173-amino-acid polypeptide reads, in one-letter code: UPF0316 protein Bsph_0745 (173 aa).

A run of 3 helical transmembrane segments spans residues 4–24 (IVLI…RTIF), 31–51 (FLAA…LSLV), and 58–78 (MLAM…GAKI).

The protein belongs to the UPF0316 family.

It is found in the cell membrane. This Lysinibacillus sphaericus (strain C3-41) protein is UPF0316 protein Bsph_0745.